Reading from the N-terminus, the 290-residue chain is Prepilin leader peptidase/N-methyltransferase (290 aa).

The helical transmembrane segment at Ala-13 to Val-33 threads the bilayer. Cys-72, Cys-75, Cys-97, and Cys-100 together coordinate Zn(2+). 5 helical membrane-spanning segments follow: residues Phe-128–Ile-148, Val-158–Ser-178, Leu-183–Val-203, Ile-228–Leu-248, and Phe-261–Gly-276.

Belongs to the peptidase A24 family. It depends on Zn(2+) as a cofactor.

The protein localises to the cell inner membrane. It catalyses the reaction Typically cleaves a -Gly-|-Phe- bond to release an N-terminal, basic peptide of 5-8 residues from type IV prepilin, and then N-methylates the new N-terminal amino group, the methyl donor being S-adenosyl-L-methionine.. Functionally, plays an essential role in type IV pili and type II pseudopili formation by proteolytically removing the leader sequence from substrate proteins and subsequently monomethylating the alpha-amino group of the newly exposed N-terminal phenylalanine. Substrates include proteins required for pilus biogenesis PilE, PilV, PilW, and PilX as well as some components of the type II general secretory apparatus GspG, GspH, GspI and GspJ. This Pseudomonas aeruginosa (strain ATCC 15692 / DSM 22644 / CIP 104116 / JCM 14847 / LMG 12228 / 1C / PRS 101 / PAO1) protein is Prepilin leader peptidase/N-methyltransferase (pilD).